Reading from the N-terminus, the 178-residue chain is Inner membrane-spanning protein YciB (178 aa).

5 helical membrane passes run I22 to F42, A50 to S70, L72 to S92, M121 to L141, and F149 to I169.

The protein belongs to the YciB family.

It is found in the cell inner membrane. Its function is as follows. Plays a role in cell envelope biogenesis, maintenance of cell envelope integrity and membrane homeostasis. This chain is Inner membrane-spanning protein YciB, found in Photorhabdus laumondii subsp. laumondii (strain DSM 15139 / CIP 105565 / TT01) (Photorhabdus luminescens subsp. laumondii).